The sequence spans 430 residues: Argininosuccinate lyase (430 aa).

The protein belongs to the lyase 1 family. Argininosuccinate lyase subfamily.

It localises to the cytoplasm. It catalyses the reaction 2-(N(omega)-L-arginino)succinate = fumarate + L-arginine. Its pathway is amino-acid biosynthesis; L-arginine biosynthesis; L-arginine from L-ornithine and carbamoyl phosphate: step 3/3. The sequence is that of Argininosuccinate lyase from Sorangium cellulosum (strain So ce56) (Polyangium cellulosum (strain So ce56)).